A 65-amino-acid polypeptide reads, in one-letter code: Hirudin-2 (65 aa).

Positions 1 to 3 (ITY) are interaction with thrombin active site. 3 disulfide bridges follow: Cys6-Cys14, Cys16-Cys28, and Cys22-Cys39. The interval 39–65 (CVTGEGTPKPQSHNDGDFEEIPEEYLQ) is disordered. O-linked (GalNAc...) threonine glycosylation is present at Thr45. The interaction with fibrinogen-binding exosite of thrombin stretch occupies residues 55 to 65 (DFEEIPEEYLQ). Residues 55-65 (DFEEIPEEYLQ) are compositionally biased toward acidic residues. A Sulfotyrosine modification is found at Tyr63.

Belongs to the protease inhibitor I14 (hirudin) family.

Its subcellular location is the secreted. In terms of biological role, hirudin is a potent thrombin-specific protease inhibitor. It forms a stable non-covalent complex with alpha-thrombin, thereby abolishing its ability to cleave fibrinogen. The chain is Hirudin-2 from Hirudo medicinalis (Medicinal leech).